Reading from the N-terminus, the 78-residue chain is Antitoxin VapB27 (78 aa).

One can recognise a SpoVT-AbrB domain in the interval 1 to 45; that stretch reads MKAVVDAAGRIVVPKPLREALGLQPGSTVEISRYGAGLHLIPTGR.

It belongs to the VapB family. As to quaternary structure, interacts with cognate toxin VapC27 and non-cognate toxins MazF6 and VapC40. Interaction with MazF6 and MazF9 partially neutralizes the toxins.

Its function is as follows. Antitoxin component of a type II toxin-antitoxin (TA) system. Cognate toxin is VapC27. Upon expression in E.coli partially counteracts the ribonuclease activity of non-cognate toxins MazF6 and MazF9. This is Antitoxin VapB27 (vapB27) from Mycobacterium tuberculosis (strain ATCC 25618 / H37Rv).